The sequence spans 304 residues: UDP-3-O-acyl-N-acetylglucosamine deacetylase (304 aa).

Zn(2+) contacts are provided by His-79, His-238, and Asp-242. Catalysis depends on His-265, which acts as the Proton donor.

It belongs to the LpxC family. The cofactor is Zn(2+).

The catalysed reaction is a UDP-3-O-[(3R)-3-hydroxyacyl]-N-acetyl-alpha-D-glucosamine + H2O = a UDP-3-O-[(3R)-3-hydroxyacyl]-alpha-D-glucosamine + acetate. The protein operates within glycolipid biosynthesis; lipid IV(A) biosynthesis; lipid IV(A) from (3R)-3-hydroxytetradecanoyl-[acyl-carrier-protein] and UDP-N-acetyl-alpha-D-glucosamine: step 2/6. Functionally, catalyzes the hydrolysis of UDP-3-O-myristoyl-N-acetylglucosamine to form UDP-3-O-myristoylglucosamine and acetate, the committed step in lipid A biosynthesis. The chain is UDP-3-O-acyl-N-acetylglucosamine deacetylase from Laribacter hongkongensis (strain HLHK9).